Reading from the N-terminus, the 997-residue chain is Autophagy-related protein 9 (997 aa).

Residues 1 to 318 are Cytoplasmic-facing; it reads MERDEYQLPN…DVYNYYLGNG (318 aa). At serine 19 the chain carries Phosphoserine. Over residues 29-39 the composition is skewed to polar residues; sequence VNPSLNSQEMS. The tract at residues 29–88 is disordered; it reads VNPSLNSQEMSNFPLPDIERGSSLLHSTNDSREDVDENDLRVPESDQGTSTEEEDEVDEE. The segment covering 79–88 has biased composition (acidic residues); it reads TEEEDEVDEE. Residues lysine 113 and lysine 121 each participate in a glycyl lysine isopeptide (Lys-Gly) (interchain with G-Cter in ubiquitin) cross-link. A Phosphoserine modification is found at serine 122. Disordered regions lie at residues 127-159 and 214-234; these read LVEG…DGFD and HHDK…NQKH. Residue lysine 138 forms a Glycyl lysine isopeptide (Lys-Gly) (interchain with G-Cter in ubiquitin) linkage. Phosphoserine occurs at positions 143 and 144. Positions 144-159 are enriched in acidic residues; that stretch reads SEEEEDNEFINNDGFD. The segment covering 221 to 233 has biased composition (polar residues); the sequence is ANNGPRNINGNQK. A helical transmembrane segment spans residues 319–339; sequence FYCIILEKILNICTLLFVVFV. The Lumenal portion of the chain corresponds to 340–376; the sequence is STYMGHCVDYSKLPTSHRVSDIIIDKCYSNSITGFTK. The chain crosses the membrane as a helical span at residues 377-397; sequence FFLWMFYFFVILKIVQLYFDV. Residues 398 to 538 lie on the Cytoplasmic side of the membrane; that stretch reads QKLSELQNFY…EELQKRFMLA (141 aa). Residues 539 to 559 lie within the membrane without spanning it; it reads GFLNIILAPFLVTYFVLLYFF. The Cytoplasmic segment spans residues 560–620; the sequence is RYFNEYKTSP…DQFPKEKTNL (61 aa). A helical membrane pass occupies residues 621–641; sequence FLKFVSFICGSFVAILAFLTV. At 642–656 the chain is on the lumenal side; the sequence is FDPENFLNFEITSDR. At serine 657 the chain carries Phosphoserine. Residues 657-677 form a helical membrane-spanning segment; sequence SVIFYITILGAIWSVSRNTIT. At 678-723 the chain is on the cytoplasmic side; it reads QEYHVFDPEETLKELYEYTHYLPKEWEGRYHKEEIKLEFCKLYNLR. Lysine 701 is covalently cross-linked (Glycyl lysine isopeptide (Lys-Gly) (interchain with G-Cter in ubiquitin)). The stretch at 724–744 is an intramembrane region; it reads IVILLRELTSLMITPFVLWFS. Over 745–997 the chain is Cytoplasmic; the sequence is LPSSAGRIVD…EYYKKSDVGR (253 aa). Residues serine 787 and serine 792 each carry the phosphoserine modification. A Phosphothreonine modification is found at threonine 794. The residue at position 802 (serine 802) is a Phosphoserine. Residue threonine 804 is modified to Phosphothreonine. 5 positions are modified to phosphoserine: serine 831, serine 842, serine 864, serine 948, and serine 969.

This sequence belongs to the ATG9 family. Homotrimer; forms a homotrimer with a central pore that forms a path between the two membrane leaflets. Interacts with ATG23 and ATG27 to form a cycling complex for trafficking to the PAS. Interacts (via N-terminus) with ATG11, required for recruitment of ATG9 to the PAS for the Cvt pathway during nutrient-rich conditions. Interacts (via N-terminus) with ATG17; required for recruitment to the PAS during autophagy and starved conditions. Interacts with ATG2 and ATG18; required for the retrieval of ATG9 from the PAS to the cytoplasmic pool. Interacts with ATG41. Interacts with the conserved oligomeric Golgi (COG) complex subunits COG3 and COG4. Interacts with TRS85. Post-translationally, phosphorylated by ATG1; phosphorylation is required for autophagy and cytoplasm to vacuole transport (Cvt) vesicle formation. Phosphorylation by ATG1 regulates ATG18 interaction and preautophagosome elongation. Phosphorylation at Ser-122 is required for selective autophagy by regulating anterograde trafficking and interaction with ATG23 and ATG27. Phosphorylation at Ser-122 prevents ubiquitination by the SCF(MET30) complex. In terms of processing, ubiquitinated by the SCF(MET30) complex in normal conditions, leading to its degradation by the proteasome, thereby preventing inappropriate induction of autophagy. Ubiquitination by the SCF(MET30) complex is prevented by phosphorylation at Ser-122.

It localises to the preautophagosomal structure membrane. The protein resides in the cytoplasmic vesicle membrane. It is found in the golgi apparatus membrane. The protein localises to the endoplasmic reticulum membrane. Its subcellular location is the mitochondrion membrane. The catalysed reaction is a 1,2-diacyl-sn-glycero-3-phosphocholine(in) = a 1,2-diacyl-sn-glycero-3-phosphocholine(out). The enzyme catalyses a 1,2-diacyl-sn-glycero-3-phospho-L-serine(in) = a 1,2-diacyl-sn-glycero-3-phospho-L-serine(out). It carries out the reaction a 1,2-diacyl-sn-glycero-3-phosphoethanolamine(in) = a 1,2-diacyl-sn-glycero-3-phosphoethanolamine(out). It catalyses the reaction a 1,2-diacyl-sn-glycero-3-phospho-(1D-myo-inositol-3-phosphate)(in) = a 1,2-diacyl-sn-glycero-3-phospho-(1D-myo-inositol-3-phosphate)(out). Phospholipid scramblase involved in autophagy and cytoplasm to vacuole transport (Cvt) vesicle formation. Cycles between the preautophagosomal structure/phagophore assembly site (PAS) and the cytoplasmic vesicle pool and supplies membrane for the growing autophagosome. Lipid scramblase activity plays a key role in preautophagosomal structure/phagophore assembly by distributing the phospholipids that arrive through ATG2 from the cytoplasmic to the luminal leaflet of the bilayer, thereby driving autophagosomal membrane expansion. Required for mitophagy. Also involved in endoplasmic reticulum-specific autophagic process and is essential for the survival of cells subjected to severe ER stress. Different machineries are required for anterograde trafficking to the PAS during either the Cvt pathway or bulk autophagy and for retrograde trafficking. Recruits vesicle-tethering proteins TRS85 and YPT1 to the autophagosome formation site. Also recruits ATG23 and ATG8 to the PAS. The protein is Autophagy-related protein 9 of Saccharomyces cerevisiae (strain YJM789) (Baker's yeast).